Reading from the N-terminus, the 178-residue chain is Ribosome maturation factor RimM (178 aa).

The 80-residue stretch at 99–178 folds into the PRC barrel domain; the sequence is EGDFYWHDLI…TIEVDWDAGF (80 aa).

This sequence belongs to the RimM family. In terms of assembly, binds ribosomal protein uS19.

The protein resides in the cytoplasm. Functionally, an accessory protein needed during the final step in the assembly of 30S ribosomal subunit, possibly for assembly of the head region. Essential for efficient processing of 16S rRNA. May be needed both before and after RbfA during the maturation of 16S rRNA. It has affinity for free ribosomal 30S subunits but not for 70S ribosomes. This chain is Ribosome maturation factor RimM, found in Mannheimia succiniciproducens (strain KCTC 0769BP / MBEL55E).